The sequence spans 128 residues: DNA-directed RNA polymerase subunit omega (128 aa).

It belongs to the RNA polymerase subunit omega family. In terms of assembly, the RNAP catalytic core consists of 2 alpha, 1 beta, 1 beta' and 1 omega subunit. When a sigma factor is associated with the core the holoenzyme is formed, which can initiate transcription.

It catalyses the reaction RNA(n) + a ribonucleoside 5'-triphosphate = RNA(n+1) + diphosphate. Promotes RNA polymerase assembly. Latches the N- and C-terminal regions of the beta' subunit thereby facilitating its interaction with the beta and alpha subunits. This chain is DNA-directed RNA polymerase subunit omega, found in Neorickettsia sennetsu (strain ATCC VR-367 / Miyayama) (Ehrlichia sennetsu).